We begin with the raw amino-acid sequence, 134 residues long: uncharacterized protein (134 aa).

A run of 2 helical transmembrane segments spans residues 16 to 36 and 43 to 63; these read IFSF…NTKL and IAYF…IHGT.

It belongs to the plectrovirus ORF5 family.

The protein resides in the host membrane. This is an uncharacterized protein from Spiroplasma citri (SpV1).